The sequence spans 318 residues: Pheromone-regulated membrane protein 5 (318 aa).

The chain crosses the membrane as a helical span at residues 75 to 98 (GTVFIVVGGIAGVIFLAILLWWVI). Ser-129 is modified (phosphoserine). Residues 238 to 247 (TISSSSASSL) are compositionally biased toward low complexity. The segment at 238–318 (TISSSSASSL…HMLEGKEQDE (81 aa)) is disordered. Residues 250 to 261 (GNEKEVGEDIRK) are compositionally biased toward basic and acidic residues. Residues 276–285 (SPESDGSVNR) are compositionally biased toward polar residues. 3 positions are modified to phosphoserine: Ser-279, Ser-282, and Ser-288. The span at 309-318 (HMLEGKEQDE) shows a compositional bias: basic and acidic residues. Lys-314 participates in a covalent cross-link: Glycyl lysine isopeptide (Lys-Gly) (interchain with G-Cter in ubiquitin).

This sequence belongs to the PRM5 family.

It is found in the membrane. The sequence is that of Pheromone-regulated membrane protein 5 (PRM5) from Saccharomyces cerevisiae (strain ATCC 204508 / S288c) (Baker's yeast).